The following is a 177-amino-acid chain: ATP synthase subunit delta (177 aa).

This sequence belongs to the ATPase delta chain family. In terms of assembly, F-type ATPases have 2 components, F(1) - the catalytic core - and F(0) - the membrane proton channel. F(1) has five subunits: alpha(3), beta(3), gamma(1), delta(1), epsilon(1). F(0) has three main subunits: a(1), b(2) and c(10-14). The alpha and beta chains form an alternating ring which encloses part of the gamma chain. F(1) is attached to F(0) by a central stalk formed by the gamma and epsilon chains, while a peripheral stalk is formed by the delta and b chains.

Its subcellular location is the cell inner membrane. In terms of biological role, f(1)F(0) ATP synthase produces ATP from ADP in the presence of a proton or sodium gradient. F-type ATPases consist of two structural domains, F(1) containing the extramembraneous catalytic core and F(0) containing the membrane proton channel, linked together by a central stalk and a peripheral stalk. During catalysis, ATP synthesis in the catalytic domain of F(1) is coupled via a rotary mechanism of the central stalk subunits to proton translocation. This protein is part of the stalk that links CF(0) to CF(1). It either transmits conformational changes from CF(0) to CF(1) or is implicated in proton conduction. The sequence is that of ATP synthase subunit delta from Neisseria gonorrhoeae (strain ATCC 700825 / FA 1090).